The primary structure comprises 347 residues: Bombesin receptor-activated protein C6orf89 (347 aa).

The Cytoplasmic segment spans residues 1–58 (MDLAANEISIYDKLSETVDLVRQTGHQCGMSEKAIEKFIRQLLEKNEPQRPPPQYPLL). The helical transmembrane segment at 59–79 (IVVYKVLATLGLILLTAYFVI) threads the bilayer. At 80–347 (QPFSPLAPEP…ICDGTAFSEL (268 aa)) the chain is on the extracellular side.

Homodimer. Interacts with BRS3. Interacts (via N-terminus) with SIN3B. In terms of processing, glycosylated.

The protein resides in the golgi apparatus membrane. It localises to the midbody. Its subcellular location is the cytoplasm. It is found in the nucleus. The protein localises to the nucleolus. In terms of biological role, exhibits histone deacetylase (HDAC) enhancer properties. May play a role in cell cycle progression and wound repair of bronchial epithelial cells. The chain is Bombesin receptor-activated protein C6orf89 (C6orf89) from Homo sapiens (Human).